The chain runs to 233 residues: TATA-box-binding protein 1 (233 aa).

2 tandem repeats follow at residues 58–134 (LQNI…ARIV) and 148–225 (IQNI…YPVL).

The protein belongs to the TBP family. In terms of assembly, belongs to the TFIID complex together with the TBP-associated factors (TAFs). Binds DNA as monomer.

It localises to the nucleus. Its function is as follows. General transcription factor that functions at the core of the DNA-binding multiprotein factor TFIID. Binding of TFIID to the TATA box is the initial transcriptional step of the pre-initiation complex (PIC), playing a role in the activation of eukaryotic genes transcribed by RNA polymerase II. This is TATA-box-binding protein 1 (TBP1) from Triticum aestivum (Wheat).